The primary structure comprises 292 residues: MPQHDQLHRYLFENFAVRGELVTVSETLQQILDNHNYPQSVKTVLAELLVATSLLTATLKFAGDITVQLQGDGPLSLAVINGNNQQQMRGVARVQGDIPDNADLKTLVGNGYLVITITPEEGERYQGVVGLEGDTLAACLEDYFLRSEQLPTRLFIRTGDVDGKPAAGGMLLQVMPAQNAQAEDFDHLAMLTETIKSEELLTLPANDVLWRLYHEEEVTLYDPQEVEFKCTCSRERCAGALKTLPDEEVDSILAEEGEIDMHCDYCGNHYLFNAMDIAEIRNNASPADPQVH.

Intrachain disulfides connect Cys230–Cys232 and Cys263–Cys266.

The protein belongs to the HSP33 family. Under oxidizing conditions two disulfide bonds are formed involving the reactive cysteines. Under reducing conditions zinc is bound to the reactive cysteines and the protein is inactive.

The protein localises to the cytoplasm. Redox regulated molecular chaperone. Protects both thermally unfolding and oxidatively damaged proteins from irreversible aggregation. Plays an important role in the bacterial defense system toward oxidative stress. The sequence is that of 33 kDa chaperonin from Salmonella typhi.